Reading from the N-terminus, the 227-residue chain is tRNA (guanine-N(7)-)-methyltransferase (227 aa).

The S-adenosyl-L-methionine site is built by Glu57, Glu82, Asp109, and Asp132. The active site involves Asp132. Residues Lys136, Asp168, and 205 to 208 each bind substrate; that span reads TKFE.

This sequence belongs to the class I-like SAM-binding methyltransferase superfamily. TrmB family.

The enzyme catalyses guanosine(46) in tRNA + S-adenosyl-L-methionine = N(7)-methylguanosine(46) in tRNA + S-adenosyl-L-homocysteine. The protein operates within tRNA modification; N(7)-methylguanine-tRNA biosynthesis. Catalyzes the formation of N(7)-methylguanine at position 46 (m7G46) in tRNA. In Leifsonia xyli subsp. xyli (strain CTCB07), this protein is tRNA (guanine-N(7)-)-methyltransferase.